A 254-amino-acid chain; its full sequence is Glucosamine-6-phosphate deaminase (254 aa).

The active-site Proton acceptor; for enolization step is the Asp-63. The active-site For ring-opening step is Asn-129. The active-site Proton acceptor; for ring-opening step is the His-131. Glu-136 functions as the For ring-opening step in the catalytic mechanism.

Belongs to the glucosamine/galactosamine-6-phosphate isomerase family. NagB subfamily.

It catalyses the reaction alpha-D-glucosamine 6-phosphate + H2O = beta-D-fructose 6-phosphate + NH4(+). It participates in amino-sugar metabolism; N-acetylneuraminate degradation; D-fructose 6-phosphate from N-acetylneuraminate: step 5/5. Functionally, catalyzes the reversible isomerization-deamination of glucosamine 6-phosphate (GlcN6P) to form fructose 6-phosphate (Fru6P) and ammonium ion. In Exiguobacterium sp. (strain ATCC BAA-1283 / AT1b), this protein is Glucosamine-6-phosphate deaminase.